A 430-amino-acid polypeptide reads, in one-letter code: tRNA(Ile)-lysidine synthase (430 aa).

24 to 29 (SGGLDS) contacts ATP.

Belongs to the tRNA(Ile)-lysidine synthase family.

The protein resides in the cytoplasm. It carries out the reaction cytidine(34) in tRNA(Ile2) + L-lysine + ATP = lysidine(34) in tRNA(Ile2) + AMP + diphosphate + H(+). Functionally, ligates lysine onto the cytidine present at position 34 of the AUA codon-specific tRNA(Ile) that contains the anticodon CAU, in an ATP-dependent manner. Cytidine is converted to lysidine, thus changing the amino acid specificity of the tRNA from methionine to isoleucine. This chain is tRNA(Ile)-lysidine synthase, found in Haemophilus influenzae (strain PittGG).